The primary structure comprises 333 residues: Taste receptor type 2 member 38 (333 aa).

The Extracellular segment spans residues 1-17; it reads MLTLTRICAVSYEVRST. Residues 18 to 38 form a helical membrane-spanning segment; that stretch reads FLFISVLEFAVGFLTNAFIFL. The Cytoplasmic portion of the chain corresponds to 39–55; the sequence is VNFWDVVKRQPLSNSDC. Residues 56 to 76 form a helical membrane-spanning segment; that stretch reads VLLCLSISRLFLHGLLFLSAI. Over 77 to 94 the chain is Extracellular; sequence QLTHFQKLSEPLNHSYQA. A helical transmembrane segment spans residues 95–115; it reads IIMLWIIANQANLWLAACLSL. Residues 116 to 142 lie on the Cytoplasmic side of the membrane; it reads LYCSKLIRFSHTFLICLASWVSRKISQ. Residues 143 to 163 form a helical membrane-spanning segment; it reads MLLGIILCSCICTVLCVWCFF. Topologically, residues 164–190 are extracellular; the sequence is SRPHFTVTTFLFMNNNTRLNWQIKDLN. Residue asparagine 178 is glycosylated (N-linked (GlcNAc...) asparagine). A helical membrane pass occupies residues 191–211; the sequence is LFYSFLFCYLWSVPPFLLFLV. Residues 212–251 lie on the Cytoplasmic side of the membrane; it reads SSGMLTVSLGRHMRTMKVYTRDSRDPSLEAHIKALKSLVS. A helical transmembrane segment spans residues 252–272; sequence FFCFFVISSCAAFISVPLLIL. Residues 273–276 lie on the Extracellular side of the membrane; it reads WRNK. The helical transmembrane segment at 277 to 297 threads the bilayer; it reads IGVMVCVGIMAACPSGHAAVL. Residues 298 to 333 lie on the Cytoplasmic side of the membrane; sequence ISGNATLRRAVTTILLWAQSSMKVRADHKADSRTLC.

The protein belongs to the G-protein coupled receptor T2R family.

The protein localises to the membrane. In terms of biological role, receptor that may play a role in the perception of bitterness and is gustducin-linked. May play a role in sensing the chemical composition of the gastrointestinal content. The activity of this receptor may stimulate alpha gustducin, mediate PLC-beta-2 activation and lead to the gating of TRPM5. This chain is Taste receptor type 2 member 38 (TAS2R38), found in Pongo pygmaeus (Bornean orangutan).